A 130-amino-acid polypeptide reads, in one-letter code: Small ribosomal subunit protein uS9 (130 aa).

Belongs to the universal ribosomal protein uS9 family.

This is Small ribosomal subunit protein uS9 from Bordetella parapertussis (strain 12822 / ATCC BAA-587 / NCTC 13253).